We begin with the raw amino-acid sequence, 228 residues long: Uracil-DNA glycosylase (228 aa).

Catalysis depends on Asp71, which acts as the Proton acceptor.

The protein belongs to the uracil-DNA glycosylase (UDG) superfamily. UNG family.

It localises to the cytoplasm. The catalysed reaction is Hydrolyzes single-stranded DNA or mismatched double-stranded DNA and polynucleotides, releasing free uracil.. Its function is as follows. Excises uracil residues from the DNA which can arise as a result of misincorporation of dUMP residues by DNA polymerase or due to deamination of cytosine. This is Uracil-DNA glycosylase from Thermobifida fusca (strain YX).